A 332-amino-acid polypeptide reads, in one-letter code: Ferredoxin--NADP reductase (332 aa).

8 residues coordinate FAD: Thr20, Glu39, Gln47, Tyr52, Val92, Phe126, Asp288, and Thr329.

It belongs to the ferredoxin--NADP reductase type 2 family. As to quaternary structure, homodimer. Requires FAD as cofactor.

The catalysed reaction is 2 reduced [2Fe-2S]-[ferredoxin] + NADP(+) + H(+) = 2 oxidized [2Fe-2S]-[ferredoxin] + NADPH. This is Ferredoxin--NADP reductase from Geobacillus kaustophilus (strain HTA426).